A 194-amino-acid polypeptide reads, in one-letter code: Protein GrpE (194 aa).

The span at 1–24 (MEEKDKEEKVTGENLEPEDKNLEQ) shows a compositional bias: basic and acidic residues. Positions 1-41 (MEEKDKEEKVTGENLEPEDKNLEQEDKEEVVGPQEEQQIDE) are disordered.

It belongs to the GrpE family. In terms of assembly, homodimer.

The protein localises to the cytoplasm. Functionally, participates actively in the response to hyperosmotic and heat shock by preventing the aggregation of stress-denatured proteins, in association with DnaK and GrpE. It is the nucleotide exchange factor for DnaK and may function as a thermosensor. Unfolded proteins bind initially to DnaJ; upon interaction with the DnaJ-bound protein, DnaK hydrolyzes its bound ATP, resulting in the formation of a stable complex. GrpE releases ADP from DnaK; ATP binding to DnaK triggers the release of the substrate protein, thus completing the reaction cycle. Several rounds of ATP-dependent interactions between DnaJ, DnaK and GrpE are required for fully efficient folding. The sequence is that of Protein GrpE from Carboxydothermus hydrogenoformans (strain ATCC BAA-161 / DSM 6008 / Z-2901).